A 264-amino-acid polypeptide reads, in one-letter code: S-adenosylmethionine decarboxylase proenzyme (264 aa).

The active-site Schiff-base intermediate with substrate; via pyruvic acid is Ser113. Position 113 is a pyruvic acid (Ser); by autocatalysis (Ser113). Residue His118 is the Proton acceptor; for processing activity of the active site. Catalysis depends on Cys141, which acts as the Proton donor; for catalytic activity.

It belongs to the prokaryotic AdoMetDC family. Type 2 subfamily. In terms of assembly, heterooctamer of four alpha and four beta chains arranged as a tetramer of alpha/beta heterodimers. The cofactor is pyruvate. In terms of processing, is synthesized initially as an inactive proenzyme. Formation of the active enzyme involves a self-maturation process in which the active site pyruvoyl group is generated from an internal serine residue via an autocatalytic post-translational modification. Two non-identical subunits are generated from the proenzyme in this reaction, and the pyruvate is formed at the N-terminus of the alpha chain, which is derived from the carboxyl end of the proenzyme. The post-translation cleavage follows an unusual pathway, termed non-hydrolytic serinolysis, in which the side chain hydroxyl group of the serine supplies its oxygen atom to form the C-terminus of the beta chain, while the remainder of the serine residue undergoes an oxidative deamination to produce ammonia and the pyruvoyl group blocking the N-terminus of the alpha chain.

It catalyses the reaction S-adenosyl-L-methionine + H(+) = S-adenosyl 3-(methylsulfanyl)propylamine + CO2. It functions in the pathway amine and polyamine biosynthesis; S-adenosylmethioninamine biosynthesis; S-adenosylmethioninamine from S-adenosyl-L-methionine: step 1/1. In terms of biological role, catalyzes the decarboxylation of S-adenosylmethionine to S-adenosylmethioninamine (dcAdoMet), the propylamine donor required for the synthesis of the polyamines spermine and spermidine from the diamine putrescine. The chain is S-adenosylmethionine decarboxylase proenzyme from Azotobacter vinelandii (strain DJ / ATCC BAA-1303).